A 208-amino-acid chain; its full sequence is High frequency lysogenization protein HflD homolog (208 aa).

Belongs to the HflD family.

Its subcellular location is the cytoplasm. The protein localises to the cell inner membrane. This Photorhabdus laumondii subsp. laumondii (strain DSM 15139 / CIP 105565 / TT01) (Photorhabdus luminescens subsp. laumondii) protein is High frequency lysogenization protein HflD homolog.